Reading from the N-terminus, the 396-residue chain is Argininosuccinate synthase (396 aa).

ATP contacts are provided by residues 10-18 (AYSGGLDTS) and A37. L-citrulline-binding residues include Y88 and S93. G118 lines the ATP pocket. L-aspartate is bound by residues T120, N124, and D125. L-citrulline is bound at residue N124. R128, S176, S185, E261, and Y273 together coordinate L-citrulline.

Belongs to the argininosuccinate synthase family. Type 1 subfamily. In terms of assembly, homotetramer.

The protein localises to the cytoplasm. The catalysed reaction is L-citrulline + L-aspartate + ATP = 2-(N(omega)-L-arginino)succinate + AMP + diphosphate + H(+). The protein operates within amino-acid biosynthesis; L-arginine biosynthesis; L-arginine from L-ornithine and carbamoyl phosphate: step 2/3. The sequence is that of Argininosuccinate synthase from Nitratidesulfovibrio vulgaris (strain DP4) (Desulfovibrio vulgaris).